A 427-amino-acid chain; its full sequence is Enolase (427 aa).

Q163 contacts (2R)-2-phosphoglycerate. E205 (proton donor) is an active-site residue. Mg(2+) contacts are provided by D242, E285, and D312. K337, R366, S367, and K388 together coordinate (2R)-2-phosphoglycerate. K337 acts as the Proton acceptor in catalysis.

It belongs to the enolase family. Requires Mg(2+) as cofactor.

It localises to the cytoplasm. It is found in the secreted. Its subcellular location is the cell surface. It carries out the reaction (2R)-2-phosphoglycerate = phosphoenolpyruvate + H2O. The protein operates within carbohydrate degradation; glycolysis; pyruvate from D-glyceraldehyde 3-phosphate: step 4/5. Its function is as follows. Catalyzes the reversible conversion of 2-phosphoglycerate (2-PG) into phosphoenolpyruvate (PEP). It is essential for the degradation of carbohydrates via glycolysis. The polypeptide is Enolase (Burkholderia multivorans (strain ATCC 17616 / 249)).